Consider the following 664-residue polypeptide: Macoilin (664 aa).

A run of 4 helical transmembrane segments spans residues 28–48 (TFLYLKFLVVWALVLLADFVV), 75–95 (AFSVFFVCVAFTSNIICLLFI), 120–140 (VCLPTVSLWILFVYIEAAIRF), and 154–174 (FAAHCIGYPVVTLGFGFKSYV). The segment covering 253-265 (REKGKEKDKDAKK) has biased composition (basic and acidic residues). The interval 253-274 (REKGKEKDKDAKKHNLGINNNN) is disordered. Serine 305 is modified (phosphoserine). Residues 320-348 (KNYKNASGVVNSSPRSHSATNGSIPSSSS) are compositionally biased toward polar residues. Residues 320–375 (KNYKNASGVVNSSPRSHSATNGSIPSSSSKNEKKQKCTSKSPSTHKDLMENCIPNN) form a disordered region. The N-linked (GlcNAc...) asparagine glycan is linked to asparagine 324. Serine 332 carries the phosphoserine modification. Residues asparagine 340 and asparagine 452 are each glycosylated (N-linked (GlcNAc...) asparagine). The tract at residues 630–664 (TSPLSPVSPHYSSKFVETSPSGLDPNASVYQPLKK) is disordered. Residues serine 631 and serine 634 each carry the phosphoserine modification. N-linked (GlcNAc...) asparagine glycosylation is present at asparagine 655.

It belongs to the macoilin family.

It localises to the rough endoplasmic reticulum membrane. It is found in the nucleus membrane. Its function is as follows. Plays a role in the regulation of neuronal activity. The protein is Macoilin (MACO1) of Pan troglodytes (Chimpanzee).